The sequence spans 543 residues: CTP synthase (543 aa).

The amidoligase domain stretch occupies residues 1–265 (MTRYIFVTGG…DDFVVERFGL (265 aa)). Position 13 (Ser-13) interacts with CTP. Ser-13 provides a ligand contact to UTP. ATP contacts are provided by residues 14–19 (SLGKGI) and Asp-71. Mg(2+) contacts are provided by Asp-71 and Glu-139. CTP contacts are provided by residues 146-148 (DIE), 186-191 (KTKPTQ), and Lys-222. Residues 186–191 (KTKPTQ) and Lys-222 each bind UTP. The 252-residue stretch at 290 to 541 (TIAMVGKYME…VNAALAQKAK (252 aa)) folds into the Glutamine amidotransferase type-1 domain. Gly-351 contacts L-glutamine. Cys-378 (nucleophile; for glutamine hydrolysis) is an active-site residue. L-glutamine-binding positions include 379 to 382 (LGMQ), Glu-402, and Arg-469. Active-site residues include His-514 and Glu-516.

Belongs to the CTP synthase family. Homotetramer.

The enzyme catalyses UTP + L-glutamine + ATP + H2O = CTP + L-glutamate + ADP + phosphate + 2 H(+). The catalysed reaction is L-glutamine + H2O = L-glutamate + NH4(+). It carries out the reaction UTP + NH4(+) + ATP = CTP + ADP + phosphate + 2 H(+). It functions in the pathway pyrimidine metabolism; CTP biosynthesis via de novo pathway; CTP from UDP: step 2/2. With respect to regulation, allosterically activated by GTP, when glutamine is the substrate; GTP has no effect on the reaction when ammonia is the substrate. The allosteric effector GTP functions by stabilizing the protein conformation that binds the tetrahedral intermediate(s) formed during glutamine hydrolysis. Inhibited by the product CTP, via allosteric rather than competitive inhibition. Functionally, catalyzes the ATP-dependent amination of UTP to CTP with either L-glutamine or ammonia as the source of nitrogen. Regulates intracellular CTP levels through interactions with the four ribonucleotide triphosphates. This is CTP synthase from Ectopseudomonas mendocina (strain ymp) (Pseudomonas mendocina).